The sequence spans 409 residues: Aspartate aminotransferase, cytoplasmic (409 aa).

Residue S2 is modified to N-acetylserine. 3 residues coordinate L-aspartate: G38, W138, and N191. Position 255 is an N6-(pyridoxal phosphate)lysine (K255). An L-aspartate-binding site is contributed by R383. Residue S385 is modified to Phosphoserine.

It belongs to the class-I pyridoxal-phosphate-dependent aminotransferase family. In terms of assembly, homodimer. Pyridoxal 5'-phosphate is required as a cofactor.

The protein resides in the cytoplasm. The enzyme catalyses L-aspartate + 2-oxoglutarate = oxaloacetate + L-glutamate. Its function is as follows. Plays a key role in amino acid metabolism. This chain is Aspartate aminotransferase, cytoplasmic, found in Schizosaccharomyces pombe (strain 972 / ATCC 24843) (Fission yeast).